The sequence spans 215 residues: Nucleoredoxin-like protein 1 (215 aa).

Positions 1–164 (MVDLFLGKVL…GAELIDRNFM (164 aa)) constitute a Thioredoxin; atypical domain. Residues 190–215 (DEKKKKKKRDDDDDDDDGGGGGGPWG) are disordered.

Belongs to the nucleoredoxin family.

The protein resides in the cell projection. It is found in the cilium. It localises to the photoreceptor outer segment. Functionally, plays an important role in retinal cone photoreceptor survival. May play a role in cone cell viability, slowing down cone degeneration, does not seem to play a role in degenerating rods. This chain is Nucleoredoxin-like protein 1 (nxnl1), found in Danio rerio (Zebrafish).